The sequence spans 562 residues: MNNNKRPLYIPYAGPALLSTPLLNKGSAFSTTERKYFNLEGLLPEAIESIEEQTGRAYKQYQSFENDMDKHIYLRNIQDTNETLFYRLVQNHISEMMPIIYTPTVGAACENFSNIYRRGRGLFISYENKNRIDDLLNNAANQNVKVIVVTDGERILGLGDQGIGGMGIPIGKLALYTACGGISPAHTLPIVLDVGTNNPQRLADPMYMGWRHPRVTGDEYADFVEDFIQAVQRRWPEALVQFEDFAQKNAMPLLERYKNRICCFNDDIQGTAAVTVGSLLAACKAAGSSLSEQRVTFLGAGSAGCGIAEAIIAQMVSEGISDAQARSQVYMVDRWGLLQEGMPNLLDFQQRLVQKAENTKDWISEEPNFSLVDVMRNAKPTVLIGVSGAPGLFSKEVIQEMHKHCERPIVFPLSNPTSRVEATPNDIIRWTNGQALVATGSPFDPVSHNGQTYPIAQCNNSFIFPGIGLGVLAIKATRVTDEMLMESSRALAECSPLAINGTGALLPPLEEIHSVSKRIAFAVAKKAIEQGHALEITDEALHQKIESYFWKPVYRRYKRTAF.

The active-site Proton donor is Y101. R154 is a binding site for NAD(+). K172 serves as the catalytic Proton acceptor. A divalent metal cation is bound by residues E243, D244, and D267. Positions 267 and 415 each coordinate NAD(+).

It belongs to the malic enzymes family. In terms of assembly, homotetramer. The cofactor is Mg(2+). Requires Mn(2+) as cofactor.

The enzyme catalyses (S)-malate + NAD(+) = pyruvate + CO2 + NADH. It carries out the reaction oxaloacetate + H(+) = pyruvate + CO2. This Aliivibrio fischeri (strain MJ11) (Vibrio fischeri) protein is NAD-dependent malic enzyme.